Here is a 938-residue protein sequence, read N- to C-terminus: MSDYKSTLNLPETGFPMRGDLAKREPGMLARWTDDDLYGIIRAAKKGKKTFILHDGPPYANGSIHIGHSVNKILKDIIVKSKGLSGYDSPYVPGWDCHGLPIELKVEQEYGKPGEKFTAAEFRAKCREYAATQVDGQRKDFIRLGVLGDWSHPYLTMDFKTEANIIRALGKIIGNGHLHKGAKPVHWCVDCRSALAEAEVEYYDKTSPSIDVAFQAVDQDALKAKFAVSNVNGPISLVIWTTTPWTLPANRAISIAPDFDYALVQIDGQAVILAKDLVESVMQRIGVTDYTILGTVKGAELELLRFTHPFMGFDVPAILGDHVTLDAGTGAVHTAPGHGPDDYVIGQKYGLETANPVGPDGTYLPGTYPTLDGVNVFKANDIVVALLQEKGALLHVEKMQHSYPCCWRHKTPIIFRATPQWFVSMDQKGLRAQSLKEIKGVQWIPDWGQARIESMVANRPDWCISRQRTWGVPMSLFVHKDTEELHPRTLELMEEVAKRVEVNGIQAWWDLDAKEILGDEADQYVKVPDTLDVWFDSGSTHSSVVDVRPEFAGHAADMYLEGSDQHRGWFMSSLMISTAMKGKAPYRQVLTHGFTVDGQGRKMSKSIGNTVSPQDVMNKLGADILRLWVASTDYTGEMAVSDEILKRAADSYRRIRNTARFLLANLNGFDPAKDMVKPEEMVVLDRWAVGCAKAAQEDILKAYEAYDFHEVVQRLMRFCSVEMGSFYLDIIKDRQYTAKADSVARRSCQTALYHIAEALVRWMAPILSFTADEVWGYLPGEREKYVFTGEWYEGLFGLADSEAMNDAFWDELLKVRGEVNKVIEQARADKKVGGSLEAAVTLYAEPELAAKLTALGDELRFVLLTSGATVADYNDAPADAQQSEVLKGLKVALSKAEGEKCPRCWHYTRDVGKVAEHAEICGRCVSNVAGDGEKRKFA.

The 'HIGH' region motif lies at proline 58–histidine 68. Lysine 183 is modified (N6-acetyllysine). Glutamate 561 contributes to the L-isoleucyl-5'-AMP binding site. Positions lysine 602–serine 606 match the 'KMSKS' region motif. Residue lysine 605 coordinates ATP. Zn(2+)-binding residues include cysteine 901, cysteine 904, cysteine 921, and cysteine 924.

Belongs to the class-I aminoacyl-tRNA synthetase family. IleS type 1 subfamily. In terms of assembly, monomer. Zn(2+) serves as cofactor.

The protein localises to the cytoplasm. It carries out the reaction tRNA(Ile) + L-isoleucine + ATP = L-isoleucyl-tRNA(Ile) + AMP + diphosphate. Its function is as follows. Catalyzes the attachment of isoleucine to tRNA(Ile). As IleRS can inadvertently accommodate and process structurally similar amino acids such as valine, to avoid such errors it has two additional distinct tRNA(Ile)-dependent editing activities. One activity is designated as 'pretransfer' editing and involves the hydrolysis of activated Val-AMP. The other activity is designated 'posttransfer' editing and involves deacylation of mischarged Val-tRNA(Ile). This Escherichia coli (strain ATCC 8739 / DSM 1576 / NBRC 3972 / NCIMB 8545 / WDCM 00012 / Crooks) protein is Isoleucine--tRNA ligase.